Reading from the N-terminus, the 193-residue chain is Peptidyl-tRNA hydrolase (193 aa).

Tyr21 lines the tRNA pocket. Residue His26 is the Proton acceptor of the active site. The tRNA site is built by Tyr72, Asn74, and Asn120.

The protein belongs to the PTH family. In terms of assembly, monomer.

The protein resides in the cytoplasm. It catalyses the reaction an N-acyl-L-alpha-aminoacyl-tRNA + H2O = an N-acyl-L-amino acid + a tRNA + H(+). Functionally, hydrolyzes ribosome-free peptidyl-tRNAs (with 1 or more amino acids incorporated), which drop off the ribosome during protein synthesis, or as a result of ribosome stalling. In terms of biological role, catalyzes the release of premature peptidyl moieties from peptidyl-tRNA molecules trapped in stalled 50S ribosomal subunits, and thus maintains levels of free tRNAs and 50S ribosomes. This chain is Peptidyl-tRNA hydrolase, found in Nocardia farcinica (strain IFM 10152).